The sequence spans 149 residues: Cytochrome c-556 (149 aa).

A signal peptide spans 1–20 (MLRTVIVAGALVLTASAVMA). Residues Met-32, Cys-137, Cys-140, and His-141 each coordinate heme c.

In terms of assembly, monomer. In terms of processing, binds 1 heme c group covalently per subunit.

Low-spin monoheme cytochrome c. The polypeptide is Cytochrome c-556 (Rhodopseudomonas palustris (strain ATCC BAA-98 / CGA009)).